We begin with the raw amino-acid sequence, 580 residues long: Probable inositol transporter 2 (580 aa).

A run of 12 helical transmembrane segments spans residues 36–56, 71–91, 106–126, 129–149, 156–176, 189–209, 275–295, 315–335, 343–363, 452–472, 490–510, and 521–541; these read GIGG…LLYI, EMIV…GGWA, FLFL…LLVV, VFVG…ISEA, GALV…SYLI, WMLG…FTLP, GLIA…NTVM, LLSL…IYFI, LLII…GVFY, FGWF…PGMG, ICGG…AQSF, and WTFL…MVCV.

It belongs to the major facilitator superfamily. Sugar transporter (TC 2.A.1.1) family. As to expression, expressed in the tapetum, but not in pollen grains. Detected in leaf vascular tissue and in roots.

The protein resides in the cell membrane. Its activity is regulated as follows. Inhibited by nickel and to a lesser extent by cobalt. In terms of biological role, plasma membrane inositol-proton symporter. Specific for several inositol epimers, such as myoinositol and scylloinositol. D-chiroinositol, mucoinositol, alloinositol and pinitol are also transported with a lower activity. Not active with galactinol and phytate. The sequence is that of Probable inositol transporter 2 (INT2) from Arabidopsis thaliana (Mouse-ear cress).